Consider the following 379-residue polypeptide: Cytochrome b (379 aa).

The next 4 membrane-spanning stretches (helical) occupy residues 33-53, 77-98, 113-133, and 178-198; these read FGSL…FLAM, WLIR…YLHI, WNIG…GYVL, and FFAF…VHLL. Heme b contacts are provided by histidine 83 and histidine 97. Residues histidine 182 and histidine 196 each contribute to the heme b site. Histidine 201 is an a ubiquinone binding site. The next 4 membrane-spanning stretches (helical) occupy residues 226 to 246, 288 to 308, 320 to 340, and 347 to 367; these read TKDF…VLFF, MGGV…PHIQ, ISQF…WIGG, and FIII…AFLP.

It belongs to the cytochrome b family. As to quaternary structure, the cytochrome bc1 complex contains 11 subunits: 3 respiratory subunits (MT-CYB, CYC1 and UQCRFS1), 2 core proteins (UQCRC1 and UQCRC2) and 6 low-molecular weight proteins (UQCRH/QCR6, UQCRB/QCR7, UQCRQ/QCR8, UQCR10/QCR9, UQCR11/QCR10 and a cleavage product of UQCRFS1). This cytochrome bc1 complex then forms a dimer. It depends on heme b as a cofactor.

The protein localises to the mitochondrion inner membrane. In terms of biological role, component of the ubiquinol-cytochrome c reductase complex (complex III or cytochrome b-c1 complex) that is part of the mitochondrial respiratory chain. The b-c1 complex mediates electron transfer from ubiquinol to cytochrome c. Contributes to the generation of a proton gradient across the mitochondrial membrane that is then used for ATP synthesis. The sequence is that of Cytochrome b (MT-CYB) from Dipodomys ordii (Ord's kangaroo rat).